Here is a 108-residue protein sequence, read N- to C-terminus: Small ribosomal subunit protein bS18c (108 aa).

2 stretches are compositionally biased toward basic residues: residues 1 to 19 (MDKSKRTFRKSKRSFRRRL) and 97 to 108 (RARKKKIGLLLN). 2 disordered regions span residues 1 to 23 (MDKSKRTFRKSKRSFRRRLPPIG) and 83 to 108 (QFERTESTPRTTGTRARKKKIGLLLN).

The protein belongs to the bacterial ribosomal protein bS18 family. Part of the 30S ribosomal subunit.

The protein localises to the plastid. The protein resides in the chloroplast. The polypeptide is Small ribosomal subunit protein bS18c (Illicium oligandrum (Star anise)).